Here is a 517-residue protein sequence, read N- to C-terminus: Urethanase (517 aa).

Residues Lys-98 and Ser-173 each act as charge relay system in the active site. Ser-197 acts as the Acyl-ester intermediate in catalysis.

It belongs to the amidase family. In terms of assembly, homooctamer.

It carries out the reaction urethane + H2O + H(+) = ethanol + NH4(+) + CO2. Its activity is regulated as follows. Exhibits poor salt tolerance but excellent tolerance to low concentrations of ethanol. EDTA has almost no impact on activity. Activity is increased in the presence of Ca(2+), Mg(2+) and Co(3+) and inhibited in the presence of Al(3+), Zn(2+) and Cu(2+). Its function is as follows. Hydrolase that can catalyze the degradation of ethyl carbamate (also called urethane), a probable human carcinogen widely found in alcoholic beverages. Can also use methyl carbamate, butyl carbamate, acetamide and urea. Also catalyzes the enantioselective hydrolysis of 2-phenylpropionamide, alpha-chlorophenylacetamide, 2-methyl-3-phenylpropionamide and alpha-methoxyphenylacetamide to the corresponding acids. Is inactive on benzamide and L-glutamine. This is Urethanase from Rhizobium radiobacter (Agrobacterium tumefaciens).